A 391-amino-acid chain; its full sequence is NADH-quinone oxidoreductase subunit D (391 aa).

Belongs to the complex I 49 kDa subunit family. In terms of assembly, NDH-1 is composed of 14 different subunits. Subunits NuoB, C, D, E, F, and G constitute the peripheral sector of the complex.

It localises to the cell inner membrane. It catalyses the reaction a quinone + NADH + 5 H(+)(in) = a quinol + NAD(+) + 4 H(+)(out). Functionally, NDH-1 shuttles electrons from NADH, via FMN and iron-sulfur (Fe-S) centers, to quinones in the respiratory chain. The immediate electron acceptor for the enzyme in this species is believed to be ubiquinone. Couples the redox reaction to proton translocation (for every two electrons transferred, four hydrogen ions are translocated across the cytoplasmic membrane), and thus conserves the redox energy in a proton gradient. This is NADH-quinone oxidoreductase subunit D from Rickettsia bellii (strain OSU 85-389).